A 507-amino-acid chain; its full sequence is ATP synthase subunit alpha, chloroplastic (507 aa).

170–177 (GDRQTGKT) provides a ligand contact to ATP.

Belongs to the ATPase alpha/beta chains family. F-type ATPases have 2 components, CF(1) - the catalytic core - and CF(0) - the membrane proton channel. CF(1) has five subunits: alpha(3), beta(3), gamma(1), delta(1), epsilon(1). CF(0) has four main subunits: a, b, b' and c.

The protein localises to the plastid. The protein resides in the chloroplast thylakoid membrane. The catalysed reaction is ATP + H2O + 4 H(+)(in) = ADP + phosphate + 5 H(+)(out). Its function is as follows. Produces ATP from ADP in the presence of a proton gradient across the membrane. The alpha chain is a regulatory subunit. This is ATP synthase subunit alpha, chloroplastic from Nicotiana tomentosiformis (Tobacco).